Here is a 362-residue protein sequence, read N- to C-terminus: MGSTSAERTQMGEDEACSYAMTITSGSVPPMVLKAVIELDVLEIIKRAGPGAHLSPAEIAAQLPATNPDAATMLDRMLRLLASYSILSYSLRTLPDGRVERLYGLAPVCQFLTKNEDGVTLGALSLMNQDKVLMESWYHLKDAVLDGGIPFNKAYGMTAFEYHGTDPRFNKIFNNGMSNHSTITMKRILENYKGFEGLSTLVDVGGGTGATLNMIISKHPAIKGINFDLPHVIEDAPTYNGVEHVGGDMFVSVPKGDAIFMKWICHDWSDEHCLNFLKNCYAALPDHGKVIVCEYILPVAPETSHAARTVFHVDAIMLAHNPGGKERTEQEFEALAKGAGFEGFRVACSAYGTKVMEFLKKA.

The S-adenosyl-L-homocysteine site is built by Ser-181, Gly-205, Asp-228, Asp-248, and Lys-262. S-adenosyl-L-methionine is bound at residue Asp-228. The active-site Proton acceptor is His-266.

It belongs to the class I-like SAM-binding methyltransferase superfamily. Cation-independent O-methyltransferase family. As to quaternary structure, homodimer. Mainly expressed in vascular and cortical tissues.

The enzyme catalyses dopamine + S-adenosyl-L-methionine = 3-methoxytyramine + S-adenosyl-L-homocysteine + H(+). The protein operates within aromatic compound metabolism. It functions in the pathway alkaloid biosynthesis. In terms of biological role, O-methyltransferase participating in the biosynthesis of natural products derived from phenylethylamine, including mescaline, a natural hallucinogen potentially used in psychotherapeutic treatments. Catalyzes the O-methylation of dopamine and 4,5-dihydroxy-3-methoxyphenethylamine. In Lophophora williamsii (Peyote), this protein is O-methyltransferase 13.